We begin with the raw amino-acid sequence, 72 residues long: Translation initiation factor IF-1 (72 aa).

The region spanning 1–72 is the S1-like domain; it reads MAKEDMIEVE…TRGRITYRFK (72 aa).

The protein belongs to the IF-1 family. In terms of assembly, component of the 30S ribosomal translation pre-initiation complex which assembles on the 30S ribosome in the order IF-2 and IF-3, IF-1 and N-formylmethionyl-tRNA(fMet); mRNA recruitment can occur at any time during PIC assembly.

The protein resides in the cytoplasm. Functionally, one of the essential components for the initiation of protein synthesis. Stabilizes the binding of IF-2 and IF-3 on the 30S subunit to which N-formylmethionyl-tRNA(fMet) subsequently binds. Helps modulate mRNA selection, yielding the 30S pre-initiation complex (PIC). Upon addition of the 50S ribosomal subunit IF-1, IF-2 and IF-3 are released leaving the mature 70S translation initiation complex. The polypeptide is Translation initiation factor IF-1 (Enterococcus faecalis (strain ATCC 700802 / V583)).